The primary structure comprises 1401 residues: DNA-directed RNA polymerase subunit beta' (1401 aa).

Zn(2+)-binding residues include C71, C73, C86, and C89. Residues D462, D464, and D466 each contribute to the Mg(2+) site. Residues C810, C884, C891, and C894 each contribute to the Zn(2+) site. Positions R1377 to E1401 are disordered.

This sequence belongs to the RNA polymerase beta' chain family. As to quaternary structure, the RNAP catalytic core consists of 2 alpha, 1 beta, 1 beta' and 1 omega subunit. When a sigma factor is associated with the core the holoenzyme is formed, which can initiate transcription. Mg(2+) serves as cofactor. It depends on Zn(2+) as a cofactor.

It catalyses the reaction RNA(n) + a ribonucleoside 5'-triphosphate = RNA(n+1) + diphosphate. Functionally, DNA-dependent RNA polymerase catalyzes the transcription of DNA into RNA using the four ribonucleoside triphosphates as substrates. The polypeptide is DNA-directed RNA polymerase subunit beta' (Rhizobium meliloti (strain 1021) (Ensifer meliloti)).